Consider the following 347-residue polypeptide: NADH-ubiquinone oxidoreductase chain 2 (347 aa).

Helical transmembrane passes span 5–22, 26–45, 60–80, 150–170, 178–198, 200–220, 242–262, 274–294, and 324–344; these read ILTI…MVLI, WLTV…PILM, FLTQ…NLLL, NPNL…WGGL, ILAY…TYNP, LMML…MLFM, SLIL…GFIP, NMII…YFYM, and TLLP…PMML.

Belongs to the complex I subunit 2 family. As to quaternary structure, core subunit of respiratory chain NADH dehydrogenase (Complex I) which is composed of 45 different subunits. Interacts with TMEM242.

Its subcellular location is the mitochondrion inner membrane. It catalyses the reaction a ubiquinone + NADH + 5 H(+)(in) = a ubiquinol + NAD(+) + 4 H(+)(out). Core subunit of the mitochondrial membrane respiratory chain NADH dehydrogenase (Complex I) which catalyzes electron transfer from NADH through the respiratory chain, using ubiquinone as an electron acceptor. Essential for the catalytic activity and assembly of complex I. This chain is NADH-ubiquinone oxidoreductase chain 2, found in Martes flavigula (Yellow-throated marten).